The chain runs to 180 residues: ATP synthase subunit delta (180 aa).

Belongs to the ATPase delta chain family. As to quaternary structure, F-type ATPases have 2 components, F(1) - the catalytic core - and F(0) - the membrane proton channel. F(1) has five subunits: alpha(3), beta(3), gamma(1), delta(1), epsilon(1). F(0) has three main subunits: a(1), b(2) and c(10-14). The alpha and beta chains form an alternating ring which encloses part of the gamma chain. F(1) is attached to F(0) by a central stalk formed by the gamma and epsilon chains, while a peripheral stalk is formed by the delta and b chains.

Its subcellular location is the cell inner membrane. F(1)F(0) ATP synthase produces ATP from ADP in the presence of a proton or sodium gradient. F-type ATPases consist of two structural domains, F(1) containing the extramembraneous catalytic core and F(0) containing the membrane proton channel, linked together by a central stalk and a peripheral stalk. During catalysis, ATP synthesis in the catalytic domain of F(1) is coupled via a rotary mechanism of the central stalk subunits to proton translocation. Its function is as follows. This protein is part of the stalk that links CF(0) to CF(1). It either transmits conformational changes from CF(0) to CF(1) or is implicated in proton conduction. In Geobacter metallireducens (strain ATCC 53774 / DSM 7210 / GS-15), this protein is ATP synthase subunit delta.